A 152-amino-acid chain; its full sequence is Protein FERTILITY RESTORER RF2, mitochondrial (152 aa).

The transit peptide at 1–52 directs the protein to the mitochondrion; it reads MSTLVTCSLPGAVTTHASTRRFGGSQFQTSQASCISFKREVSAKAVLRSVRC. Positions 52–69 are enriched in polar residues; it reads CNATQTQSAQRKSSTATV. The tract at residues 52 to 101 is disordered; the sequence is CNATQTQSAQRKSSTATVKRSDPKGKTQGPKLDDGSGGFPPFRFGKGGGG.

Its subcellular location is the mitochondrion. Non-functional allele of the RF2 fertility restorer of rice varieties with LD-type cytoplasmic male sterility (CMS). Non-functional RF2 alleles are found in japonica cultivars Taichung 65 and Nipponbare (AC F1SZ44), and is due to the presence of Thr-78 which replaces Ile-78 in the functional allele. Functional allele is found in the japonica cultivars Fukuyama and Owarihatamochi (AC F1SZ42), and indica cultivar Kasalath (AC F1SZ41). The sequence is that of Protein FERTILITY RESTORER RF2, mitochondrial from Oryza sativa subsp. japonica (Rice).